The sequence spans 577 residues: MNIQALLSEKVSQAMIAAGAPADCEPQVRQSAKVQFGDYQANGMMAVAKKLGMAPRQLAEQVLTHLDLSGIASKVEIAGPGFINIFLEPAFLAEQVQQALASERLGVSQPTRQTIVVDYSAPNVAKEMHVGHLRSTIIGDAAVRTLEFLGHHVIRANHVGDWGTQFGMLIAWLEKQQQENAGDMALADLEGFYRDAKKHYDEDEAFAERARNYVVKLQSGDTYFREMWRKLVDITMTQNQITYDRLNVTLTRDDVMGESLYNPMLPGIVADLKAKGLAVESEGATVVFLDEFKNKEGDPMGVIIQKKDGGYLYTTTDIACAKYRYETLHADRVLYYIDSRQHQHLMQAWTIVRKAGYVPDSVPLEHHMFGMMLGKDGKPFKTRAGGTVKLADLLDEALERARRLVAEKNPDMSADELEKLANAVGIGAVKYADLSKNRTTDYIFDWDNMLAFEGNTAPYMQYAYTRVLSVFRKADIDEQALASAPVIISEDREAQLAARLLQFEETLTVVAREGTPHVMCAYLYDVAGLFSGFYEHCPILSAENDAVRNSRLKLAQLTAKTLKLGLDTLGIETVERM.

Residues Pro-122–His-132 carry the 'HIGH' region motif.

The protein belongs to the class-I aminoacyl-tRNA synthetase family. As to quaternary structure, monomer.

The protein localises to the cytoplasm. The catalysed reaction is tRNA(Arg) + L-arginine + ATP = L-arginyl-tRNA(Arg) + AMP + diphosphate. The protein is Arginine--tRNA ligase of Salmonella dublin (strain CT_02021853).